A 505-amino-acid polypeptide reads, in one-letter code: Aspartyl/glutamyl-tRNA(Asn/Gln) amidotransferase subunit B (505 aa).

Belongs to the GatB/GatE family. GatB subfamily. Heterotrimer of A, B and C subunits.

It catalyses the reaction L-glutamyl-tRNA(Gln) + L-glutamine + ATP + H2O = L-glutaminyl-tRNA(Gln) + L-glutamate + ADP + phosphate + H(+). It carries out the reaction L-aspartyl-tRNA(Asn) + L-glutamine + ATP + H2O = L-asparaginyl-tRNA(Asn) + L-glutamate + ADP + phosphate + 2 H(+). In terms of biological role, allows the formation of correctly charged Asn-tRNA(Asn) or Gln-tRNA(Gln) through the transamidation of misacylated Asp-tRNA(Asn) or Glu-tRNA(Gln) in organisms which lack either or both of asparaginyl-tRNA or glutaminyl-tRNA synthetases. The reaction takes place in the presence of glutamine and ATP through an activated phospho-Asp-tRNA(Asn) or phospho-Glu-tRNA(Gln). The sequence is that of Aspartyl/glutamyl-tRNA(Asn/Gln) amidotransferase subunit B from Dinoroseobacter shibae (strain DSM 16493 / NCIMB 14021 / DFL 12).